A 592-amino-acid chain; its full sequence is Serine/threonine-protein kinase ksg1 (592 aa).

A compositionally biased stretch (polar residues) spans 1-10 (MRNTHNPNET). Residues 1-92 (MRNTHNPNET…NPSSGASTPN (92 aa)) form a disordered region. Over residues 11–22 (EASEDAENDTQS) the composition is skewed to acidic residues. Residues 27–37 (SFDHGSSEKLN) are compositionally biased toward basic and acidic residues. The segment covering 42-68 (PKTQNSAIPQSNALNTTPNESTSQIDS) has biased composition (polar residues). Phosphoserine is present on residues S64 and S69. Over residues 80–92 (STPNPSSGASTPN) the composition is skewed to polar residues. Residues 99–366 (FKFGEILGEG…VDEIHQHPFF (268 aa)) enclose the Protein kinase domain. ATP is bound by residues 109–111 (SYS) and K128. The PIF-pocket stretch occupies residues 130 to 175 (LDKRHIIKEKKEKYVNIEKEALCILSKHPGFIKLFYTFQDAHNLYF). ATP-binding positions include 178–180 (SLA) and E184. D223 acts as the Proton acceptor in catalysis. ATP-binding residues include E227 and D241. A PH domain is found at 461–572 (ISKIGTLNVY…ELLDKASSIS (112 aa)).

Belongs to the protein kinase superfamily. AGC Ser/Thr protein kinase family. PDPK1 subfamily.

The protein resides in the cytoplasm. It carries out the reaction L-seryl-[protein] + ATP = O-phospho-L-seryl-[protein] + ADP + H(+). The catalysed reaction is L-threonyl-[protein] + ATP = O-phospho-L-threonyl-[protein] + ADP + H(+). Involved in the control of sexual development and cell growth under stressed conditions. Phosphorylates AGC kinase gad8 at 'Thr-387', activating gad8 kinase activity and promoting sexual development. Phosphorylates AGC kinase psk1 at 'Ser-248', activating psk1 kinase activity and promoting phosphorylation of ribosomal protein S6. This is Serine/threonine-protein kinase ksg1 from Schizosaccharomyces pombe (strain 972 / ATCC 24843) (Fission yeast).